Reading from the N-terminus, the 120-residue chain is MFLLYEYDIFWAFLIISSAIPVLAFLISGVLSPIRKGPEKLSSYESGIEPIGDAWLQFRIRYYMFALVFVVFDVETVFLYPWAMSFDVLGVSAFIEAFIFVLILILGLVYAWRKGALEWS.

3 helical membrane-spanning segments follow: residues 9–29, 64–84, and 88–108; these read IFWA…LISG, MFAL…PWAM, and VLGV…ILGL.

Belongs to the complex I subunit 3 family. As to quaternary structure, NDH is composed of at least 16 different subunits, 5 of which are encoded in the nucleus.

It is found in the plastid. Its subcellular location is the chloroplast thylakoid membrane. It catalyses the reaction a plastoquinone + NADH + (n+1) H(+)(in) = a plastoquinol + NAD(+) + n H(+)(out). The enzyme catalyses a plastoquinone + NADPH + (n+1) H(+)(in) = a plastoquinol + NADP(+) + n H(+)(out). Its function is as follows. NDH shuttles electrons from NAD(P)H:plastoquinone, via FMN and iron-sulfur (Fe-S) centers, to quinones in the photosynthetic chain and possibly in a chloroplast respiratory chain. The immediate electron acceptor for the enzyme in this species is believed to be plastoquinone. Couples the redox reaction to proton translocation, and thus conserves the redox energy in a proton gradient. The protein is NAD(P)H-quinone oxidoreductase subunit 3, chloroplastic of Lobularia maritima (Sweet alyssum).